Reading from the N-terminus, the 224-residue chain is Envelope glycoprotein L (224 aa).

A signal peptide spans 1-19 (MGILGWVGLIAVGVLCVRG). Residues 20-161 (GLPSTEYVIR…FDYSRTRRCV (142 aa)) are interaction with gH. Residues 23-201 (STEYVIRSRV…LTTPPPIIAT (179 aa)) form the gL alphaherpesvirus-type domain. Cystine bridges form between Cys-44/Cys-76 and Cys-149/Cys-160. The tract at residues 161–224 (VGRQDLGPTN…RRRRPHSRRL (64 aa)) is disordered. The span at 213 to 224 (KSRRRRPHSRRL) shows a compositional bias: basic residues.

This sequence belongs to the herpesviridae glycoprotein L (gL) family. Alphaherpesvirinae gL subfamily. In terms of assembly, interacts with glycoprotein H (gH); this interaction is necessary for the correct processing and cell surface expression of gH. The heterodimer gH/gL seems to interact with gB trimers during fusion.

It localises to the virion membrane. Its subcellular location is the host cell membrane. The protein resides in the host Golgi apparatus. The protein localises to the host trans-Golgi network. Its function is as follows. The heterodimer glycoprotein H-glycoprotein L is required for the fusion of viral and plasma membranes leading to virus entry into the host cell. Acts as a functional inhibitor of gH and maintains gH in an inhibited form. Upon binding to host integrins, gL dissociates from gH leading to activation of the viral fusion glycoproteins gB and gH. The polypeptide is Envelope glycoprotein L (Human herpesvirus 1 (strain 17) (HHV-1)).